Consider the following 825-residue polypeptide: MTVLQEPVQAAIWQALNHYAYRDAVFLAERLYAEVHSEEALFLLATCYYRSGKAYKAYRLLKGHSCTTPQCKYLLAKCCVDLSKLAEGEQILSGGVFNKQKSHDDIVTEFGDSACFTLSLLGHVYCKTDRLAKGSECYQKSLSLNPFLWSPFESLCEIGEKPDPDQTFKLTSLQNFSSCLPNSCTTLVSNHSLSHRQPETVLTETPQDTIELNRLNLESSNSKYSLNTDSSVSYIDSAVISPDTVPLGTGTSILSKQVQNKPKTGRSLLGGPAALSPLTPSFGILPLETPSPGDGSYLQNYTNTSSVIDVPPTGAPSKKSVARIGQTGTKSVFSQSGNSREVTPILVAQTQSSGPQTSTTPQVLSPTITSPPNALPRRSSRLFTSDSSTTKENSKKLKMKFPPKIPNRKTKSKTNKGGITQPNINDSLEITKLDSSIISEGKISTITPQIQAFNLQKAAAEGLMSLLREMGKGYLALCSYNCKEAINILSHLPSHHYNTGWVLCQIGRAYFELSEYMQAERIFSEVRRIENYRVEGMEIYSTTLWHLQKDVALSVLSKDLTDMDKNSPEAWCAAGNCFSLQREHDIAIKFFQRAIQVDPNYAYAYTLLGHEFVLTEELDKALACFRNAIRVNPRHYNAWYGLGMIYYKQEKFSLAEMHFQKALDINPQSSVLLCHIGVVQHALKKSEKALDTLNKAIVIDPKNPLCKFHRASVLFANEKYKSALQELEELKQIVPKESLVYFLIGKVYKKLGQTHLALMNFSWAMDLDPKGANNQIKEAIDKRYLPDDEEPITQEEQIMGTDESQESSMTDADDTQLHAAESDEF.

TPR repeat units lie at residues 6 to 35 (EPVQ…YAEV), 38 to 65 (EEAL…KGHS), 67 to 99 (TTPQ…VFNK), and 115 to 145 (CFTL…LSLN). 3 positions are modified to phosphothreonine: Thr205, Thr209, and Thr244. Ser291 bears the Phosphoserine mark. The tract at residues 305 to 423 (SSVIDVPPTG…TNKGGITQPN (119 aa)) is disordered. The residue at position 313 (Thr313) is a Phosphothreonine. Positions 326–341 (QTGTKSVFSQSGNSRE) are enriched in polar residues. Ser339 is modified (phosphoserine). The span at 349 to 362 (QTQSSGPQTSTTPQ) shows a compositional bias: low complexity. Residues 363-372 (VLSPTITSPP) are compositionally biased toward polar residues. A Phosphothreonine modification is found at Thr367. Phosphoserine is present on residues Ser380 and Ser387. A compositionally biased stretch (polar residues) spans 381 to 391 (RLFTSDSSTTK). Residues 396 to 414 (KLKMKFPPKIPNRKTKSKT) show a composition bias toward basic residues. Ser427 carries the post-translational modification Phosphoserine. At Thr431 the chain carries Phosphothreonine. A phosphoserine mark is found at Ser436 and Ser439. Thr447 carries the phosphothreonine modification. TPR repeat units lie at residues 465–495 (SLLR…LPSH), 499–528 (TGWV…EVRR), 533–563 (RVEG…LTDM), 567–598 (SPEA…IQVD), 601–631 (YAYA…AIRV), 635–667 (HYNA…DINP), 670–702 (SVLL…IDPK), 704–734 (PLCK…KQIV), and 737–768 (ESLV…MDLD). The tract at residues 782-825 (KRYLPDDEEPITQEEQIMGTDESQESSMTDADDTQLHAAESDEF) is disordered. At Ser822 the chain carries Phosphoserine.

It belongs to the APC3/CDC27 family. As to quaternary structure, homodimer. The mammalian APC/C is composed at least of 14 distinct subunits ANAPC1, ANAPC2, CDC27/APC3, ANAPC4, ANAPC5, CDC16/APC6, ANAPC7, CDC23/APC8, ANAPC10, ANAPC11, CDC26/APC12, ANAPC13, ANAPC15 and ANAPC16 that assemble into a complex of at least 19 chains with a combined molecular mass of around 1.2 MDa; APC/C interacts with FZR1 and FBXO5. Interacts with RB. Interacts with FAM168B/MANI. Interacts with MCPH1. Post-translationally, phosphorylated. Phosphorylation on Ser-427 and Thr-447 occurs specifically during mitosis.

It is found in the nucleus. It localises to the cytoplasm. The protein localises to the cytoskeleton. Its subcellular location is the spindle. It functions in the pathway protein modification; protein ubiquitination. Its function is as follows. Component of the anaphase promoting complex/cyclosome (APC/C), a cell cycle-regulated E3 ubiquitin ligase that controls progression through mitosis and the G1 phase of the cell cycle. The APC/C complex acts by mediating ubiquitination and subsequent degradation of target proteins: it mainly mediates the formation of 'Lys-11'-linked polyubiquitin chains and, to a lower extent, the formation of 'Lys-48'- and 'Lys-63'-linked polyubiquitin chains. The APC/C complex catalyzes assembly of branched 'Lys-11'-/'Lys-48'-linked branched ubiquitin chains on target proteins. In Bos taurus (Bovine), this protein is Cell division cycle protein 27 homolog (CDC27).